A 306-amino-acid chain; its full sequence is tRNA-cytidine(32) 2-sulfurtransferase (306 aa).

The PP-loop motif motif lies at 49–54; it reads SGGKDS. [4Fe-4S] cluster contacts are provided by Cys124, Cys127, and Cys215.

The protein belongs to the TtcA family. In terms of assembly, homodimer. Mg(2+) is required as a cofactor. The cofactor is [4Fe-4S] cluster.

It is found in the cytoplasm. The catalysed reaction is cytidine(32) in tRNA + S-sulfanyl-L-cysteinyl-[cysteine desulfurase] + AH2 + ATP = 2-thiocytidine(32) in tRNA + L-cysteinyl-[cysteine desulfurase] + A + AMP + diphosphate + H(+). The protein operates within tRNA modification. Its function is as follows. Catalyzes the ATP-dependent 2-thiolation of cytidine in position 32 of tRNA, to form 2-thiocytidine (s(2)C32). The sulfur atoms are provided by the cysteine/cysteine desulfurase (IscS) system. The protein is tRNA-cytidine(32) 2-sulfurtransferase of Azoarcus sp. (strain BH72).